Here is a 765-residue protein sequence, read N- to C-terminus: Transient receptor potential cation channel subfamily V member 6 (765 aa).

Topologically, residues 1-367 (MGPLQGDGGP…SLKWKRYGRP (367 aa)) are cytoplasmic. 3 ANK repeats span residues 84 to 114 (IWES…KVHQ), 118 to 147 (MGET…ELVF), and 156 to 185 (EGQT…SVSA). Positions 133–143 (EAAMVLMEAAP) are interaction with calmodulin. The residue at position 201 (Tyr-201) is a Phosphotyrosine; by SRC. ANK repeat units follow at residues 202 to 231 (FGEH…DIRA), 235 to 277 (LGNT…LVPN), and 279 to 308 (QGLT…HTQW). The chain crosses the membrane as a helical span at residues 368 to 388 (YFCMLGAIYLLYIICFTMCCI). Residues 389-425 (YRPLKPRTNNRTSPRDNTLLQQKLLQEAYMTPKDDIR) are Extracellular-facing. Asn-398 carries an N-linked (GlcNAc...) asparagine glycan. Residues 426–448 (LVGELVTVIGAIIILLVEVPDIF) traverse the membrane as a helical segment. Residues 449–463 (RMGVTRFFGQTILGG) are Cytoplasmic-facing. A helical transmembrane segment spans residues 464-483 (PFHVLIITYAFMVLVTMVMR). The Extracellular portion of the chain corresponds to 484–489 (LISASG). The chain crosses the membrane as a helical span at residues 490 to 509 (EVVPMSFALVLGWCNVMYFA). Over 510–529 (RGFQMLGPFTIMIQKMIFGD) the chain is Cytoplasmic. The chain crosses the membrane as a helical span at residues 530 to 552 (LMRFCWLMAVVILGFASAFYIIF). The Extracellular segment spans residues 553–565 (QTEDPEELGHFYD). An intramembrane region (pore-forming) is located at residues 566 to 585 (YPMALFSTFELFLTIIDGPA). Positions 581 to 585 (IDGPA) match the Selectivity filter motif. Residue Asp-582 participates in Ca(2+) binding. Residues 586 to 596 (NYNVDLPFMYS) lie on the Extracellular side of the membrane. The helical transmembrane segment at 597 to 617 (ITYAAFAIIATLLMLNLLIAM) threads the bilayer. At 618–765 (MGDTHWRVAH…EDGESWEYQI (148 aa)) the chain is on the cytoplasmic side. An interaction with S100A10 region spans residues 638-642 (VATTV). The interval 731 to 751 (SSANWERLRQGTLRRDLRGII) is interaction with calmodulin. At Thr-742 the chain carries Phosphothreonine; by PKC/PRKCA.

It belongs to the transient receptor (TC 1.A.4) family. TrpV subfamily. TRPV6 sub-subfamily. Homotetramer. Probably also forms heterotetramers with TRPV5. Interacts with TRPV5. Interacts with S100A10 and probably with the ANAX2-S100A10 heterotetramer. The interaction with S100A10 is required for the trafficking to the plasma membrane. Interacts with BSPRY. Interacts with TCAF1 and TCAF2 isoform 2. Interacts with calmodulin. Post-translationally, glycosylated. Phosphorylation at Tyr-201 by SRC leads to an increased calcium influx through the channel. Probably dephosphorylated at this site by PTPN1. Phosphorylation by PRKCA at the calmodulin binding site delays channel inactivation. As to expression, expressed at high levels in the gastrointestinal tract, including esophagus, stomach, duodenum, jejunum, ileum and colon, and in pancreas, placenta, prostate and salivary gland. Expressed at moderate levels in liver, kidney and testis. Expressed in trophoblasts of placenta villus trees (at protein level). Expressed in locally advanced prostate cancer, metastatic and androgen-insensitive prostatic lesions but not detected in healthy prostate tissue and benign prostatic hyperplasia.

It is found in the cell membrane. The catalysed reaction is Ca(2+)(in) = Ca(2+)(out). Calcium selective cation channel that mediates Ca(2+) uptake in various tissues, including the intestine. Important for normal Ca(2+) ion homeostasis in the body, including bone and skin. The channel is activated by low internal calcium level, probably including intracellular calcium store depletion, and the current exhibits an inward rectification. Inactivation includes both a rapid Ca(2+)-dependent and a slower Ca(2+)-calmodulin-dependent mechanism; the latter may be regulated by phosphorylation. In vitro, is slowly inhibited by Mg(2+) in a voltage-independent manner. Heteromeric assembly with TRPV5 seems to modify channel properties. TRPV5-TRPV6 heteromultimeric concatemers exhibit voltage-dependent gating. In Homo sapiens (Human), this protein is Transient receptor potential cation channel subfamily V member 6 (TRPV6).